A 354-amino-acid polypeptide reads, in one-letter code: Chorismate synthase (354 aa).

Arg48 serves as a coordination point for NADP(+). FMN contacts are provided by residues 125 to 127 (RAS), Gly277, 292 to 296 (KPIPS), and Arg318.

Belongs to the chorismate synthase family. Homotetramer. Requires FMNH2 as cofactor.

It catalyses the reaction 5-O-(1-carboxyvinyl)-3-phosphoshikimate = chorismate + phosphate. It functions in the pathway metabolic intermediate biosynthesis; chorismate biosynthesis; chorismate from D-erythrose 4-phosphate and phosphoenolpyruvate: step 7/7. In terms of biological role, catalyzes the anti-1,4-elimination of the C-3 phosphate and the C-6 proR hydrogen from 5-enolpyruvylshikimate-3-phosphate (EPSP) to yield chorismate, which is the branch point compound that serves as the starting substrate for the three terminal pathways of aromatic amino acid biosynthesis. This reaction introduces a second double bond into the aromatic ring system. The polypeptide is Chorismate synthase (Nitratidesulfovibrio vulgaris (strain ATCC 29579 / DSM 644 / CCUG 34227 / NCIMB 8303 / VKM B-1760 / Hildenborough) (Desulfovibrio vulgaris)).